The following is a 108-amino-acid chain: Bublin coiled-coil protein (108 aa).

2 disordered regions span residues 1 to 23 (MSGP…DDDF) and 67 to 108 (RLEF…DEGS). The stretch at 25 to 73 (SEEYEAINSMLDQINSYLDDLEERNDSLNGKLHELMESNRQARLEFRAQ) forms a coiled coil. The segment covering 99 to 108 (ENDKKIDEGS) has biased composition (basic and acidic residues).

The protein belongs to the UPF0184 (EST00098) family.

The protein localises to the cell junction. Its subcellular location is the cytoplasm. The protein resides in the cytoskeleton. Functionally, essential for intermediate filament organization in intestinal cells, interacts with intermediate filament and regulates intestinal lumen morphology. The chain is Bublin coiled-coil protein (bbln) from Takifugu rubripes (Japanese pufferfish).